The chain runs to 250 residues: Purine nucleoside phosphorylase BQ2027_MB2173C (250 aa).

Residues His-77, Cys-114, and His-131 each coordinate Zn(2+).

The protein belongs to the purine nucleoside phosphorylase YfiH/LACC1 family. In terms of assembly, homodimer. Requires Cu(2+) as cofactor. Zn(2+) serves as cofactor.

It carries out the reaction adenosine + phosphate = alpha-D-ribose 1-phosphate + adenine. The catalysed reaction is S-methyl-5'-thioadenosine + phosphate = 5-(methylsulfanyl)-alpha-D-ribose 1-phosphate + adenine. The enzyme catalyses inosine + phosphate = alpha-D-ribose 1-phosphate + hypoxanthine. It catalyses the reaction adenosine + H2O + H(+) = inosine + NH4(+). Purine nucleoside enzyme that catalyzes the phosphorolysis of adenosine and inosine nucleosides, yielding D-ribose 1-phosphate and the respective free bases, adenine and hypoxanthine. Also catalyzes the phosphorolysis of S-methyl-5'-thioadenosine into adenine and S-methyl-5-thio-alpha-D-ribose 1-phosphate. Also has adenosine deaminase activity. The polypeptide is Purine nucleoside phosphorylase BQ2027_MB2173C (Mycobacterium bovis (strain ATCC BAA-935 / AF2122/97)).